Consider the following 391-residue polypeptide: RAB6A-GEF complex partner protein 2 (391 aa).

Belongs to the RGP1 family. Forms a complex with RIC1; the interaction enhances RAB6A GTPase activity. Interacts with RIC1. Interacts with RAB6A; the interaction is direct with a preference for RAB6A-GDP. Interacts with RAB33B.

It is found in the cytoplasm. It localises to the cytosol. The protein resides in the membrane. Functionally, the RIC1-RGP1 complex acts as a guanine nucleotide exchange factor (GEF), which activates RAB6A by exchanging bound GDP for free GTP and may thereby required for efficient fusion of endosome-derived vesicles with the Golgi compartment. The RIC1-RGP1 complex participates in the recycling of mannose-6-phosphate receptors. This is RAB6A-GEF complex partner protein 2 from Homo sapiens (Human).